Consider the following 882-residue polypeptide: Ion channel DMI1 (882 aa).

The disordered stretch occupies residues 1 to 122 (MAKSNEESSN…PSSSSITKQQ (122 aa)). Polar residues predominate over residues 48–62 (TSTTKTDFSEQQWNY). Over residues 78–95 (PPPPPSKPPVNLIPPHPR) the composition is skewed to pro residues. Positions 107–117 (SSLLPQPSSSS) are enriched in low complexity. The next 4 membrane-spanning stretches (helical) occupy residues 129–149 (SPIF…SAYL), 192–212 (TIAL…YKYL), 255–275 (LALL…LYAV), and 307–327 (IVSV…LGLV). 2 RCK N-terminal domains span residues 348 to 489 (RNHV…ETVV) and 608 to 757 (PEKI…DKSI). The stretch at 378–403 (VIVVLAEKEKEEMEMDIAKLEFDFMG) forms a coiled coil.

Belongs to the castor/pollux (TC 1.A.1.23) family. As to quaternary structure, interacts (via c-terminus) with CNGC15A, CNGC15B and CNGC15C (via N-terminus). The Nod factor has no effect on these interactions, implying that the complex is maintained after activation. Mainly expressed in roots and nodules. Also detected in pods, flowers, leaves, and stems.

The protein localises to the nucleus membrane. In terms of biological role, required for early signal transduction events leading to endosymbiosis. Acts early in a signal transduction chain leading from the perception of Nod factor to the activation of calcium spiking. Also involved in mycorrhizal symbiosis. May be involved in the regulation of the calcium channel responsible for calcium spiking by mobilizing another cation, and thereby altering the membrane potential. The sequence is that of Ion channel DMI1 from Medicago truncatula (Barrel medic).